We begin with the raw amino-acid sequence, 199 residues long: Glycerol-3-phosphate acyltransferase (199 aa).

Helical transmembrane passes span 4-24, 56-76, 80-100, 115-135, and 154-176; these read FALF…AILI, LAVL…GYYL, QFEL…PIFF, IAPI…FVFL, and YVWW…LIYR.

The protein belongs to the PlsY family. Probably interacts with PlsX.

Its subcellular location is the cell inner membrane. The enzyme catalyses an acyl phosphate + sn-glycerol 3-phosphate = a 1-acyl-sn-glycero-3-phosphate + phosphate. It functions in the pathway lipid metabolism; phospholipid metabolism. In terms of biological role, catalyzes the transfer of an acyl group from acyl-phosphate (acyl-PO(4)) to glycerol-3-phosphate (G3P) to form lysophosphatidic acid (LPA). This enzyme utilizes acyl-phosphate as fatty acyl donor, but not acyl-CoA or acyl-ACP. The chain is Glycerol-3-phosphate acyltransferase from Haemophilus influenzae (strain PittGG).